The following is a 264-amino-acid chain: Putative hydro-lyase cgR_2449 (264 aa).

This sequence belongs to the D-glutamate cyclase family.

In Corynebacterium glutamicum (strain R), this protein is Putative hydro-lyase cgR_2449.